Consider the following 376-residue polypeptide: Glucose-1-phosphate adenylyltransferase (376 aa).

Residues Y101, G166, E181–K182, and S192 each bind alpha-D-glucose 1-phosphate.

The protein belongs to the bacterial/plant glucose-1-phosphate adenylyltransferase family. Homotetramer.

The enzyme catalyses alpha-D-glucose 1-phosphate + ATP + H(+) = ADP-alpha-D-glucose + diphosphate. The protein operates within glycan biosynthesis; glycogen biosynthesis. Functionally, involved in the biosynthesis of ADP-glucose, a building block required for the elongation reactions to produce glycogen. Catalyzes the reaction between ATP and alpha-D-glucose 1-phosphate (G1P) to produce pyrophosphate and ADP-Glc. The protein is Glucose-1-phosphate adenylyltransferase of Bacillus thuringiensis (strain Al Hakam).